Reading from the N-terminus, the 144-residue chain is Interleukin-9 (144 aa).

The signal sequence occupies residues 1–18 (MLVTYILASVLLFSSVLG). Position 19 is a pyrrolidone carboxylic acid (Q19). N50, N78, N101, and N114 each carry an N-linked (GlcNAc...) asparagine glycan.

This sequence belongs to the IL-7/IL-9 family. Interacts with IL9R. Interacts with IL2RG.

It is found in the secreted. Its function is as follows. Multifunctional cytokine secreted mainly by T-helper 2 lymphocytes and also mast cells or NKT cells that plays important roles in the immune response against parasites. Affects intestinal epithelial permeability and adaptive immunity. In addition, induces the differentiation of specific T-cell subsets such as IL-17 producing helper T-cells (TH17) and also proliferation and differentiation of mast cells. Mechanistically, exerts its biological effects through a receptor composed of IL9R subunit and a signal transducing subunit IL2RG. Receptor stimulation results in the rapid activation of JAK1 and JAK3 kinase activities leading to STAT1, STAT3 and STAT5-mediated transcriptional programs. Induction of differentiation genes seems to be mediated by STAT1 alone, while protection of cells from apoptosis depends on STAT3 and STAT5. This chain is Interleukin-9 (Il9), found in Mus musculus (Mouse).